The primary structure comprises 315 residues: Alpha- and gamma-adaptin-binding protein p34 (315 aa).

A disordered region spans residues 197 to 233 (IGSADPCHPEQPHLPAADRTESLSDHRGGASNTTDAQ). Over residues 203–224 (CHPEQPHLPAADRTESLSDHRG) the composition is skewed to basic and acidic residues. A phosphoserine mark is found at serine 310 and serine 311.

As to quaternary structure, associated with AP-1 and AP-2 complexes.

It is found in the cytoplasm. It localises to the cytosol. In terms of biological role, may be involved in endocytic recycling of growth factor receptors such as EGFR. The chain is Alpha- and gamma-adaptin-binding protein p34 (AAGAB) from Pongo abelii (Sumatran orangutan).